A 640-amino-acid polypeptide reads, in one-letter code: 1-deoxy-D-xylulose-5-phosphate synthase (640 aa).

Thiamine diphosphate is bound by residues His-79 and 120–122 (AHA). A Mg(2+)-binding site is contributed by Asp-151. Residues 152-153 (GS), Asn-180, Tyr-287, and Glu-369 contribute to the thiamine diphosphate site. Asn-180 is a Mg(2+) binding site.

The protein belongs to the transketolase family. DXPS subfamily. In terms of assembly, homodimer. Mg(2+) serves as cofactor. The cofactor is thiamine diphosphate.

It carries out the reaction D-glyceraldehyde 3-phosphate + pyruvate + H(+) = 1-deoxy-D-xylulose 5-phosphate + CO2. Its pathway is metabolic intermediate biosynthesis; 1-deoxy-D-xylulose 5-phosphate biosynthesis; 1-deoxy-D-xylulose 5-phosphate from D-glyceraldehyde 3-phosphate and pyruvate: step 1/1. Its function is as follows. Catalyzes the acyloin condensation reaction between C atoms 2 and 3 of pyruvate and glyceraldehyde 3-phosphate to yield 1-deoxy-D-xylulose-5-phosphate (DXP). The sequence is that of 1-deoxy-D-xylulose-5-phosphate synthase from Hyphomonas neptunium (strain ATCC 15444).